The following is a 792-amino-acid chain: Lon protease (792 aa).

Residues 16-211 form the Lon N-terminal domain; sequence DAVVVVPVSN…KVSAFLAQRL (196 aa). 361–368 serves as a coordination point for ATP; the sequence is GPPGVGKT. The 182-residue stretch at 597–778 folds into the Lon proteolytic domain; that stretch reads TSVPGVATGL…EDAIEAGLDP (182 aa). Residues Ser684 and Lys727 contribute to the active site.

Belongs to the peptidase S16 family. In terms of assembly, homohexamer. Organized in a ring with a central cavity.

It is found in the cytoplasm. The enzyme catalyses Hydrolysis of proteins in presence of ATP.. ATP-dependent serine protease that mediates the selective degradation of mutant and abnormal proteins as well as certain short-lived regulatory proteins. Required for cellular homeostasis and for survival from DNA damage and developmental changes induced by stress. Degrades polypeptides processively to yield small peptide fragments that are 5 to 10 amino acids long. Binds to DNA in a double-stranded, site-specific manner. This is Lon protease from Phenylobacterium zucineum (strain HLK1).